We begin with the raw amino-acid sequence, 245 residues long: 14-3-3 protein theta (245 aa).

Methionine 1 carries the post-translational modification N-acetylmethionine. N6-acetyllysine is present on lysine 3. An N6-acetyllysine; alternate modification is found at lysine 49. Lysine 49 is covalently cross-linked (Glycyl lysine isopeptide (Lys-Gly) (interchain with G-Cter in SUMO2); alternate). An N6-acetyllysine modification is found at lysine 68. 3'-nitrotyrosine is present on tyrosine 82. Serine 92 bears the Phosphoserine mark. The residue at position 104 (tyrosine 104) is a 3'-nitrotyrosine. Lysine 115 carries the post-translational modification N6-acetyllysine. A Phosphoserine; by CK1 modification is found at serine 232.

Belongs to the 14-3-3 family. In terms of assembly, homodimer. Interacts with CDKN1B ('Thr-198' phosphorylated form); the interaction translocates CDKN1B to the cytoplasm. Interacts with SSH1. Interacts with GAB2. Interacts with RGS7 (phosphorylated form). Interacts with CDK16. Interacts with the 'Ser-241' phosphorylated form of PDPK1. Interacts with the 'Thr-369' phosphorylated form of DAPK2. Interacts with PI4KB, TBC1D22A and TBC1D22B. Interacts with SLITRK1. Interacts with RIPOR2. Interacts with INAVA; the interaction increases upon PRR (pattern recognition receptor) stimulation and is required for cellular signaling pathway activation and cytokine secretion. Interacts with MARK2, MARK3 and MARK4. Interacts with MEFV.

It localises to the cytoplasm. Its function is as follows. Adapter protein implicated in the regulation of a large spectrum of both general and specialized signaling pathways. Binds to a large number of partners, usually by recognition of a phosphoserine or phosphothreonine motif. Binding generally results in the modulation of the activity of the binding partner. Negatively regulates the kinase activity of PDPK1. The sequence is that of 14-3-3 protein theta (Ywhaq) from Mus musculus (Mouse).